Consider the following 859-residue polypeptide: Alanine--tRNA ligase (859 aa).

The Zn(2+) site is built by His562, His566, Cys664, and His668.

This sequence belongs to the class-II aminoacyl-tRNA synthetase family. The cofactor is Zn(2+).

Its subcellular location is the cytoplasm. It carries out the reaction tRNA(Ala) + L-alanine + ATP = L-alanyl-tRNA(Ala) + AMP + diphosphate. In terms of biological role, catalyzes the attachment of alanine to tRNA(Ala) in a two-step reaction: alanine is first activated by ATP to form Ala-AMP and then transferred to the acceptor end of tRNA(Ala). Also edits incorrectly charged Ser-tRNA(Ala) and Gly-tRNA(Ala) via its editing domain. This chain is Alanine--tRNA ligase, found in Aliivibrio fischeri (strain ATCC 700601 / ES114) (Vibrio fischeri).